The chain runs to 294 residues: Small ribosomal subunit protein uS2 (294 aa).

A disordered region spans residues 254–294 (ESSNTEAPVAETAAAEAPVADAAIEAPVAEEAKTTEADDTK). Low complexity predominate over residues 259–282 (EAPVAETAAAEAPVADAAIEAPVA). Residues 283-294 (EEAKTTEADDTK) are compositionally biased toward basic and acidic residues.

The protein belongs to the universal ribosomal protein uS2 family.

The protein is Small ribosomal subunit protein uS2 of Renibacterium salmoninarum (strain ATCC 33209 / DSM 20767 / JCM 11484 / NBRC 15589 / NCIMB 2235).